Here is a 171-residue protein sequence, read N- to C-terminus: MFDIGFSELLLVFIIGLVVLGPQRLPVAVKTVAGWIRALRSLATTVQNELTQELKLQEFQDSLKKVEKASLTNLTPELKASMDELRQAAESMKRSYVANDPEKASDEAHTIHNPVVKDNETAHEGVTPAAAQTQASSPEQKPETTPEPVVKPAADAEPKTAAPSPSSSDKP.

Residues 1 to 21 (MFDIGFSELLLVFIIGLVVLG) traverse the membrane as a helical segment. Residues 117–171 (KDNETAHEGVTPAAAQTQASSPEQKPETTPEPVVKPAADAEPKTAAPSPSSSDKP) are disordered. The span at 130–139 (AAQTQASSPE) shows a compositional bias: polar residues.

This sequence belongs to the TatB family. In terms of assembly, the Tat system comprises two distinct complexes: a TatABC complex, containing multiple copies of TatA, TatB and TatC subunits, and a separate TatA complex, containing only TatA subunits. Substrates initially bind to the TatABC complex, which probably triggers association of the separate TatA complex to form the active translocon.

Its subcellular location is the cell inner membrane. Part of the twin-arginine translocation (Tat) system that transports large folded proteins containing a characteristic twin-arginine motif in their signal peptide across membranes. Together with TatC, TatB is part of a receptor directly interacting with Tat signal peptides. TatB may form an oligomeric binding site that transiently accommodates folded Tat precursor proteins before their translocation. This is Sec-independent protein translocase protein TatB from Escherichia coli O6:K15:H31 (strain 536 / UPEC).